A 300-amino-acid chain; its full sequence is Acetylglutamate kinase (300 aa).

Residues 73–74 (GG), arginine 95, and asparagine 197 contribute to the substrate site.

The protein belongs to the acetylglutamate kinase family. ArgB subfamily.

It is found in the cytoplasm. It catalyses the reaction N-acetyl-L-glutamate + ATP = N-acetyl-L-glutamyl 5-phosphate + ADP. It participates in amino-acid biosynthesis; L-arginine biosynthesis; N(2)-acetyl-L-ornithine from L-glutamate: step 2/4. In terms of biological role, catalyzes the ATP-dependent phosphorylation of N-acetyl-L-glutamate. The polypeptide is Acetylglutamate kinase (Polynucleobacter necessarius subsp. necessarius (strain STIR1)).